We begin with the raw amino-acid sequence, 367 residues long: Phospho-N-acetylmuramoyl-pentapeptide-transferase (367 aa).

The next 10 helical transmembrane spans lie at Leu16–Phe36, Thr62–Val82, Met87–Leu107, Phe125–Tyr145, Val158–Ile178, Ser190–Ala210, Leu214–Tyr234, Gln240–Leu260, Gln264–Ile284, and Phe326–Ser346.

Belongs to the glycosyltransferase 4 family. MraY subfamily. Requires Mg(2+) as cofactor.

It is found in the cell membrane. It catalyses the reaction UDP-N-acetyl-alpha-D-muramoyl-L-alanyl-gamma-D-glutamyl-meso-2,6-diaminopimeloyl-D-alanyl-D-alanine + di-trans,octa-cis-undecaprenyl phosphate = di-trans,octa-cis-undecaprenyl diphospho-N-acetyl-alpha-D-muramoyl-L-alanyl-D-glutamyl-meso-2,6-diaminopimeloyl-D-alanyl-D-alanine + UMP. It participates in cell wall biogenesis; peptidoglycan biosynthesis. Functionally, catalyzes the initial step of the lipid cycle reactions in the biosynthesis of the cell wall peptidoglycan: transfers peptidoglycan precursor phospho-MurNAc-pentapeptide from UDP-MurNAc-pentapeptide onto the lipid carrier undecaprenyl phosphate, yielding undecaprenyl-pyrophosphoryl-MurNAc-pentapeptide, known as lipid I. In Chloroflexus aggregans (strain MD-66 / DSM 9485), this protein is Phospho-N-acetylmuramoyl-pentapeptide-transferase.